The following is a 222-amino-acid chain: UPF0758 protein YicR (222 aa).

One can recognise an MPN domain in the interval 100–222 (PLLSPEMTRE…YVSFAERGWI (123 aa)). The Zn(2+) site is built by H171, H173, and D184. Positions 171 to 184 (HNHPSGCAEPSKAD) match the JAMM motif motif.

It belongs to the UPF0758 family. YicR subfamily.

The polypeptide is UPF0758 protein YicR (Escherichia coli (strain K12 / MC4100 / BW2952)).